The primary structure comprises 108 residues: MIKTTLLFFATALCEIIGCFLPWLWLKRNASIWLLLPAGISLALFVWLLTLHPAASGRVYAAYGGVYVCTALIWLRVVDGVKLTLYDWTGALIALCGMLIIVAGWGRT.

Over 1 to 5 (MIKTT) the chain is Periplasmic. The helical transmembrane segment at 6–26 (LLFFATALCEIIGCFLPWLWL) threads the bilayer. The Cytoplasmic portion of the chain corresponds to 27–30 (KRNA). A helical transmembrane segment spans residues 31-51 (SIWLLLPAGISLALFVWLLTL). Residues 52–60 (HPAASGRVY) are Periplasmic-facing. Residues 61 to 81 (AAYGGVYVCTALIWLRVVDGV) form a helical membrane-spanning segment. The Cytoplasmic portion of the chain corresponds to 82–84 (KLT). Residues 85-105 (LYDWTGALIALCGMLIIVAGW) traverse the membrane as a helical segment. Topologically, residues 106-108 (GRT) are periplasmic.

Belongs to the UPF0060 family.

It is found in the cell inner membrane. The chain is UPF0060 membrane protein YnfA from Escherichia coli O127:H6 (strain E2348/69 / EPEC).